The sequence spans 229 residues: MAAFGINSKIFQSMEMAILFLLAISIDRYCFAADEDMLQDVCVADLHSKVKVNGFPCKTNFTAADFSSLAISKPGATNNKFGSVVTTANVEQVPGLNTLGVSLARIDYAPGGINPPHTHPRASEMVFVMEGELDVGFITTANVLVSKKIIKGEVFVFPRGLVHFQKNNGEVPAAVISAFNSQLPGTQSIPITLFGASPPVPDDVLAQTFQINTEDVQQIKSKFAPVKKF.

Residues 1 to 32 form the signal peptide; the sequence is MAAFGINSKIFQSMEMAILFLLAISIDRYCFA. Cysteines 42 and 57 form a disulfide. Asparagine 60 carries N-linked (GlcNAc...) asparagine glycosylation. Positions 69-217 constitute a Cupin type-1 domain; sequence LAISKPGATN…TFQINTEDVQ (149 aa). Mn(2+) is bound by residues histidine 117, histidine 119, glutamate 124, and histidine 163.

In terms of assembly, monomer. In the absence of manganese, it forms tetrameric and pentameric forms which show superoxide dismutase activity. Requires Mn(2+) as cofactor. Nectary tissues and to a lower level ovary. Not detected in petals, stems, leaves, roots or other floral tissues.

It localises to the secreted. The protein resides in the extracellular space. It is found in the apoplast. The catalysed reaction is 2 superoxide + 2 H(+) = H2O2 + O2. Its function is as follows. May interact with bacterial adhesins thereby protecting the reproductive tissues from microbial attack. Has no oxalate oxidase activity. This Nicotiana langsdorffii x Nicotiana sanderae (Ornamental tobacco) protein is Nectarin-1 (NECI).